Here is a 144-residue protein sequence, read N- to C-terminus: Probable DNA-directed RNA polymerases I and III subunit RPAC2 (144 aa).

Residues 14-47 (KVEAETMEVDEQPQETPQVDDEEDLNVPSKKKME) are disordered. Over residues 18-38 (ETMEVDEQPQETPQVDDEEDL) the composition is skewed to acidic residues.

Belongs to the archaeal Rpo11/eukaryotic RPB11/RPC19 RNA polymerase subunit family. In terms of assembly, component of the RNA polymerase I (Pol I) and RNA polymerase III (Pol III) complexes consisting of at least 13 and 17 subunits, respectively.

It is found in the nucleus. Functionally, DNA-dependent RNA polymerase catalyzes the transcription of DNA into RNA using the four ribonucleoside triphosphates as substrates. Common core component of RNA polymerases I and III which synthesize ribosomal RNA precursors and small RNAs, such as 5S rRNA and tRNAs, respectively. The chain is Probable DNA-directed RNA polymerases I and III subunit RPAC2 (rpac-19) from Caenorhabditis elegans.